Reading from the N-terminus, the 1066-residue chain is Ubiquitin conjugation factor E4 A (1066 aa).

Positions 33-57 (KEQLKQQSDELPASPDDSDNSVSES) are disordered. Residue lysine 386 is modified to N6-acetyllysine. Positions 987–1061 (DACDEFLDPI…QRWLAERKQQ (75 aa)) constitute a U-box domain.

It belongs to the ubiquitin conjugation factor E4 family.

It is found in the cytoplasm. The catalysed reaction is S-ubiquitinyl-[E2 ubiquitin-conjugating enzyme]-L-cysteine + [acceptor protein]-L-lysine = [E2 ubiquitin-conjugating enzyme]-L-cysteine + N(6)-ubiquitinyl-[acceptor protein]-L-lysine.. It participates in protein modification; protein ubiquitination. Functionally, ubiquitin-protein ligase that probably functions as an E3 ligase in conjunction with specific E1 and E2 ligases. May also function as an E4 ligase mediating the assembly of polyubiquitin chains on substrates ubiquitinated by another E3 ubiquitin ligase. Mediates 'Lys-48'-linked polyubiquitination of substrates. The chain is Ubiquitin conjugation factor E4 A from Pongo abelii (Sumatran orangutan).